Reading from the N-terminus, the 519-residue chain is Nitrogen fixation regulatory protein (519 aa).

One can recognise a PAS 1 domain in the interval 23–93; it reads LPEIFRQTVE…QALWGRLAQK (71 aa). Residues 94–148 enclose the PAC domain; sequence KPWSGVLVNRRKDKTLYLAELTVAPVLNEAGETIYYLGMHRDTSELHELEQRVNN. The PAS 2 domain occupies 151–217; that stretch reads LMIEAVVNAA…FETLENQGSA (67 aa). Residues 302–517 form the Histidine kinase domain; sequence AAIHRLQGPV…RIVVELPFSA (216 aa). Histidine 305 carries the post-translational modification Phosphohistidine; by autocatalysis.

It depends on FAD as a cofactor.

The catalysed reaction is ATP + protein L-histidine = ADP + protein N-phospho-L-histidine.. In terms of biological role, required for the inhibition of NifA activity in response to oxygen and low level of fixed nitrogen. This Azotobacter vinelandii protein is Nitrogen fixation regulatory protein (nifL).